The primary structure comprises 104 residues: Large ribosomal subunit protein uL24 (104 aa).

Belongs to the universal ribosomal protein uL24 family. As to quaternary structure, part of the 50S ribosomal subunit.

In terms of biological role, one of two assembly initiator proteins, it binds directly to the 5'-end of the 23S rRNA, where it nucleates assembly of the 50S subunit. Its function is as follows. One of the proteins that surrounds the polypeptide exit tunnel on the outside of the subunit. The chain is Large ribosomal subunit protein uL24 from Mesorhizobium japonicum (strain LMG 29417 / CECT 9101 / MAFF 303099) (Mesorhizobium loti (strain MAFF 303099)).